Consider the following 489-residue polypeptide: L-asparagine permease 1 (489 aa).

A run of 12 helical transmembrane segments spans residues 25–45 (QLQMIGIGGAIGTGLFLGAGG), 49–69 (KAGPGLFLVYGVCGVFVFLIL), 100–120 (AVGWMYFLHWAMTSIVDTTAI), 137–157 (ILALIALTVVLSMNLISVEWF), 162–182 (FWAALIKVLALMAFLVVGTVF), 210–230 (WLPLLIVTSGVVFAYSAVELV), 255–275 (IAIFYVGSVALLALLLPYTAY), 289–309 (IGFHGAGDLMNIVVLTAALSS), 344–364 (YGGIVLTAVITLFGVALNAFK), 369–389 (FEIVLNMSALGIIAGWATIVL), 413–433 (SPYSGYLTLLFLLVVLVTMAS), and 439–459 (TWTVATLIIVIPALTAGWYLV).

It belongs to the amino acid-polyamine-organocation (APC) superfamily. Amino acid transporter (AAT) (TC 2.A.3.1) family.

It localises to the cell membrane. The sequence is that of L-asparagine permease 1 (ansP1) from Mycobacterium tuberculosis (strain CDC 1551 / Oshkosh).